The chain runs to 305 residues: MAVPFLQDHDTKHDLLTMSHLSLEEIEHILHDAQQFENGALWSPEEKLFVANLFFEPSTRTRVSFEVAEQRLGLHVVNVDGERSSVQKGETLYDTAKTLESIGVNALVIRHRQDRYFEELKDRINIPIINAGDGCGHHPTQSLLDLWTIQQEFGRFSNLITVISGDLRHSRVARSNAETLTRLGARVYISGPREWMEGYEGVYPYVTMDEAVELADVIMLLRVQHERHDGTVSFTQASYHEQFGLTVKREARMKPKSIVMHPAPVNRNVEIASELVECPRSRIFKQMKNGVAIRMAVLKRALTDE.

Carbamoyl phosphate-binding residues include Arg60 and Thr61. Lys88 serves as a coordination point for L-aspartate. Carbamoyl phosphate contacts are provided by Arg110, His138, and Gln141. Arg171 and Arg222 together coordinate L-aspartate. Residues Ala263 and Pro264 each contribute to the carbamoyl phosphate site.

This sequence belongs to the aspartate/ornithine carbamoyltransferase superfamily. ATCase family. In terms of assembly, heterododecamer (2C3:3R2) of six catalytic PyrB chains organized as two trimers (C3), and six regulatory PyrI chains organized as three dimers (R2).

The catalysed reaction is carbamoyl phosphate + L-aspartate = N-carbamoyl-L-aspartate + phosphate + H(+). Its pathway is pyrimidine metabolism; UMP biosynthesis via de novo pathway; (S)-dihydroorotate from bicarbonate: step 2/3. Functionally, catalyzes the condensation of carbamoyl phosphate and aspartate to form carbamoyl aspartate and inorganic phosphate, the committed step in the de novo pyrimidine nucleotide biosynthesis pathway. The sequence is that of Aspartate carbamoyltransferase catalytic subunit from Halalkalibacterium halodurans (strain ATCC BAA-125 / DSM 18197 / FERM 7344 / JCM 9153 / C-125) (Bacillus halodurans).